The following is a 228-amino-acid chain: MLTTGSKNLDALLGGGIDKGILTQVYGPFATGKTTLAMQIGLLNEGKVAYIDTEGGFSPERLAKMVESRGMDSNSTLQKFLIFEAFDFKEQKKTISNLKKIVNEKFSMIVVDSITNHYRVEEKKSSMTTDLGKQLQVLLWLARKYNLAVIVTNQVYFDSKQNALKPLAEHIMGYKCKDILRLEKLRPGLRIAVLERHRFKPEGGIVHFEITDKGIEDIEKIKSSQTTL.

Belongs to the eukaryotic RecA-like protein family. RadB subfamily.

Its function is as follows. Involved in DNA repair and in homologous recombination. May regulate the cleavage reactions of the branch-structured DNA. Has a very weak ATPase activity that is not stimulated by DNA. Binds DNA but does not promote DNA strands exchange. The sequence is that of DNA repair and recombination protein RadB from Thermococcus sibiricus (strain DSM 12597 / MM 739).